A 242-amino-acid polypeptide reads, in one-letter code: MVIIRSFFITGTDTDVGKTVVTSLLTRFLIDMGVNAFPYKPVQSGATTNGARMIPSDAQMYQLVRPEFDVTDFNTYLLEKPCSPHLAADLANITLDRTVITKQVHQLEEAHDAVLIEGAGGLYVPLTNDGYCYIDFMEELNVPTILVSALRVGTINHTVLSIEAMKARNLPIAGIIFNQLQIGNPVIEQSNVETIRKLTDTPILGFVPYSPDIHTVLADDKLRRHLYKDWDKRRFKELIHSD.

ATP is bound at residue 15 to 20 (DVGKTV). Thr-19 contributes to the Mg(2+) binding site. Lys-40 is a catalytic residue. Ser-44 contacts substrate. Residue Glu-117 coordinates Mg(2+). ATP contacts are provided by residues 117–120 (EGAG), 178–179 (NQ), and 208–210 (PYS).

The protein belongs to the dethiobiotin synthetase family. As to quaternary structure, homodimer. Requires Mg(2+) as cofactor.

The protein resides in the cytoplasm. The catalysed reaction is (7R,8S)-7,8-diammoniononanoate + CO2 + ATP = (4R,5S)-dethiobiotin + ADP + phosphate + 3 H(+). The protein operates within cofactor biosynthesis; biotin biosynthesis; biotin from 7,8-diaminononanoate: step 1/2. Its function is as follows. Catalyzes a mechanistically unusual reaction, the ATP-dependent insertion of CO2 between the N7 and N8 nitrogen atoms of 7,8-diaminopelargonic acid (DAPA, also called 7,8-diammoniononanoate) to form a ureido ring. This chain is ATP-dependent dethiobiotin synthetase BioD, found in Halalkalibacterium halodurans (strain ATCC BAA-125 / DSM 18197 / FERM 7344 / JCM 9153 / C-125) (Bacillus halodurans).